The chain runs to 758 residues: ATP-dependent RNA helicase dbp7 (758 aa).

Disordered stretches follow at residues 26–99 (GGTW…QPRQ) and 111–130 (PQKVEEVKEEGHVEDAKPTN). Basic residues predominate over residues 35–45 (AKKIAKHHAKG). Positions 84-99 (GKQQSHTHPHSNQPRQ) are enriched in polar residues. The segment covering 111-127 (PQKVEEVKEEGHVEDAK) has biased composition (basic and acidic residues). The short motif at 138 to 167 (DTFTNLGLSPSLAAHLLTKLELKAPTAIQK) is the Q motif element. Residues 171–372 (SQLLKEEGDA…EISLKDAVHI (202 aa)) form the Helicase ATP-binding domain. 184–191 (AETGSGKT) lines the ATP pocket. The DEAD box signature appears at 308–311 (DEGD). In terms of domain architecture, Helicase C-terminal spans 398-603 (QLKQSYAVVA…ALTRADANDI (206 aa)). Disordered stretches follow at residues 455 to 483 (KEDGDESSDTDKSEDKPPSSPHGTIAPAT) and 691 to 758 (VPGL…FNLA). Residues 696 to 709 (QGKEETKKDFKAER) show a composition bias toward basic and acidic residues.

The protein belongs to the DEAD box helicase family. DDX31/DBP7 subfamily.

The protein resides in the nucleus. The protein localises to the nucleolus. The catalysed reaction is ATP + H2O = ADP + phosphate + H(+). Its function is as follows. ATP-binding RNA helicase involved in the biogenesis of 60S ribosomal subunits and is required for the normal formation of 25S and 5.8S rRNAs. This is ATP-dependent RNA helicase dbp7 (dbp7) from Neosartorya fischeri (strain ATCC 1020 / DSM 3700 / CBS 544.65 / FGSC A1164 / JCM 1740 / NRRL 181 / WB 181) (Aspergillus fischerianus).